Reading from the N-terminus, the 284-residue chain is Undecaprenyl-diphosphatase (284 aa).

Helical transmembrane passes span Ile-7–Leu-27, Glu-44–His-64, Leu-90–Asp-110, Phe-116–Ile-136, Val-167–Ile-187, Phe-197–Phe-217, Phe-229–Phe-249, and Phe-259–Phe-279.

The protein belongs to the UppP family.

Its subcellular location is the cell membrane. It catalyses the reaction di-trans,octa-cis-undecaprenyl diphosphate + H2O = di-trans,octa-cis-undecaprenyl phosphate + phosphate + H(+). Functionally, catalyzes the dephosphorylation of undecaprenyl diphosphate (UPP). Confers resistance to bacitracin. In Lactococcus lactis subsp. cremoris (strain MG1363), this protein is Undecaprenyl-diphosphatase.